A 122-amino-acid polypeptide reads, in one-letter code: Small ribosomal subunit protein uS13 (122 aa).

The interval 93-122 (RRGLPVRGQNTKTNARTRKGPKRTAGGKKK) is disordered. Residues 107 to 122 (ARTRKGPKRTAGGKKK) show a composition bias toward basic residues.

The protein belongs to the universal ribosomal protein uS13 family. Part of the 30S ribosomal subunit. Forms a loose heterodimer with protein S19. Forms two bridges to the 50S subunit in the 70S ribosome.

Its function is as follows. Located at the top of the head of the 30S subunit, it contacts several helices of the 16S rRNA. In the 70S ribosome it contacts the 23S rRNA (bridge B1a) and protein L5 of the 50S subunit (bridge B1b), connecting the 2 subunits; these bridges are implicated in subunit movement. Contacts the tRNAs in the A and P-sites. The polypeptide is Small ribosomal subunit protein uS13 (Syntrophomonas wolfei subsp. wolfei (strain DSM 2245B / Goettingen)).